We begin with the raw amino-acid sequence, 227 residues long: Ribosomal RNA small subunit methyltransferase G (227 aa).

Residues G81, L86, 131 to 132 (AE), and R149 each bind S-adenosyl-L-methionine.

The protein belongs to the methyltransferase superfamily. RNA methyltransferase RsmG family.

It is found in the cytoplasm. Specifically methylates the N7 position of guanine in position 518 of 16S rRNA. This is Ribosomal RNA small subunit methyltransferase G from Rhodococcus jostii (strain RHA1).